Reading from the N-terminus, the 158-residue chain is S-ribosylhomocysteine lyase (158 aa).

Residues histidine 57, histidine 61, and cysteine 125 each contribute to the Fe cation site.

Belongs to the LuxS family. As to quaternary structure, homodimer. Fe cation is required as a cofactor.

It carries out the reaction S-(5-deoxy-D-ribos-5-yl)-L-homocysteine = (S)-4,5-dihydroxypentane-2,3-dione + L-homocysteine. Its function is as follows. Involved in the synthesis of autoinducer 2 (AI-2) which is secreted by bacteria and is used to communicate both the cell density and the metabolic potential of the environment. The regulation of gene expression in response to changes in cell density is called quorum sensing. Catalyzes the transformation of S-ribosylhomocysteine (RHC) to homocysteine (HC) and 4,5-dihydroxy-2,3-pentadione (DPD). This chain is S-ribosylhomocysteine lyase, found in Deinococcus radiodurans (strain ATCC 13939 / DSM 20539 / JCM 16871 / CCUG 27074 / LMG 4051 / NBRC 15346 / NCIMB 9279 / VKM B-1422 / R1).